The primary structure comprises 347 residues: N-acetyl-gamma-glutamyl-phosphate reductase (347 aa).

C152 is an active-site residue.

The protein belongs to the NAGSA dehydrogenase family. Type 1 subfamily.

It is found in the cytoplasm. The enzyme catalyses N-acetyl-L-glutamate 5-semialdehyde + phosphate + NADP(+) = N-acetyl-L-glutamyl 5-phosphate + NADPH + H(+). It functions in the pathway amino-acid biosynthesis; L-arginine biosynthesis; N(2)-acetyl-L-ornithine from L-glutamate: step 3/4. Functionally, catalyzes the NADPH-dependent reduction of N-acetyl-5-glutamyl phosphate to yield N-acetyl-L-glutamate 5-semialdehyde. This is N-acetyl-gamma-glutamyl-phosphate reductase from Ehrlichia ruminantium (strain Gardel).